We begin with the raw amino-acid sequence, 199 residues long: RNA-free ribonuclease P (199 aa).

The protein belongs to the HARP family.

It carries out the reaction Endonucleolytic cleavage of RNA, removing 5'-extranucleotides from tRNA precursor.. In terms of biological role, RNA-free RNase P that catalyzes the removal of the 5'-leader sequence from pre-tRNA to produce the mature 5'-terminus. In Pyrococcus furiosus (strain ATCC 43587 / DSM 3638 / JCM 8422 / Vc1), this protein is RNA-free ribonuclease P.